A 392-amino-acid chain; its full sequence is Methylthioribose-1-phosphate isomerase (392 aa).

Asp267 (proton donor) is an active-site residue.

It belongs to the eIF-2B alpha/beta/delta subunits family. MtnA subfamily.

It localises to the cytoplasm. The protein resides in the nucleus. The enzyme catalyses 5-(methylsulfanyl)-alpha-D-ribose 1-phosphate = 5-(methylsulfanyl)-D-ribulose 1-phosphate. It functions in the pathway amino-acid biosynthesis; L-methionine biosynthesis via salvage pathway; L-methionine from S-methyl-5-thio-alpha-D-ribose 1-phosphate: step 1/6. Catalyzes the interconversion of methylthioribose-1-phosphate (MTR-1-P) into methylthioribulose-1-phosphate (MTRu-1-P). This chain is Methylthioribose-1-phosphate isomerase, found in Blastomyces gilchristii (strain SLH14081) (Blastomyces dermatitidis).